Consider the following 190-residue polypeptide: Ribosome maturation factor RimM (190 aa).

One can recognise a PRC barrel domain in the interval 95-171; sequence DPDEFYDHEL…VVMIEPPEGL (77 aa). A disordered region spans residues 169–190; sequence EGLLDPDFGDKSNSDNSNSDND.

The protein belongs to the RimM family. As to quaternary structure, binds ribosomal protein uS19.

It is found in the cytoplasm. Its function is as follows. An accessory protein needed during the final step in the assembly of 30S ribosomal subunit, possibly for assembly of the head region. Essential for efficient processing of 16S rRNA. May be needed both before and after RbfA during the maturation of 16S rRNA. It has affinity for free ribosomal 30S subunits but not for 70S ribosomes. The protein is Ribosome maturation factor RimM of Rhodococcus erythropolis (strain PR4 / NBRC 100887).